The chain runs to 341 residues: KH domain-containing RNA-binding protein qki.S (341 aa).

Residues 88–154 form the KH domain; it reads YVPVKEYPDF…WEHLNEDLHV (67 aa). A Nuclear localization signal motif is present at residues 324 to 330; the sequence is RVHPYQR.

This sequence belongs to the quaking family. As to quaternary structure, homodimer; does not require RNA to homodimerize.

It localises to the nucleus. It is found in the cytoplasm. Functionally, RNA reader protein, which recognizes and binds specific RNAs, thereby regulating RNA metabolic processes, such as pre-mRNA splicing, circular RNA (circRNA) formation, mRNA export, mRNA stability and/or translation. Involved in various cellular processes, such as mRNA storage into stress granules, apoptosis, interferon response, glial cell fate and development. Binds to the 5'-NACUAAY-N(1,20)-UAAY-3' RNA core sequence. Acts as a mRNA modification reader that specifically recognizes and binds mRNA transcripts modified by internal N(7)-methylguanine (m7G). Promotes the formation of circular RNAs (circRNAs): acts by binding to sites flanking circRNA-forming exons. CircRNAs are produced by back-splicing circularization of pre-mRNAs. Required to protect and promote stability of mRNAs which promotes oligodendrocyte differentiation. Acts as an important regulator of muscle development. Essential for notochord development. This chain is KH domain-containing RNA-binding protein qki.S, found in Xenopus laevis (African clawed frog).